Consider the following 29-residue polypeptide: Dermaseptin-1 (29 aa).

Val-29 carries the valine amide modification.

Expressed by the skin glands.

Its subcellular location is the secreted. Its function is as follows. Antimicrobial peptide, active against the Gram-positive bacterium S.aureus, the Gram-negative bacteria E.coli and P.aeruginosa, and the yeasts C.albicans and P.brasiliensis. Has hemolytic activity (40% hemolysis at 128 ug/ml). This Phyllomedusa tarsius (Brownbelly leaf frog) protein is Dermaseptin-1.